Reading from the N-terminus, the 357-residue chain is Heme A synthase (357 aa).

5 consecutive transmembrane segments (helical) span residues 24-44, 110-130, 140-160, 175-195, and 209-229; these read LVRY…MVGG, MLAR…WVTG, MLGL…MVAS, IHLT…RGLV, and FAGW…LVAG. A heme-binding site is contributed by H272. 3 helical membrane-spanning segments follow: residues 274 to 294, 303 to 323, and 325 to 345; these read MFAY…WKQV, TIVL…TLLM, and VPLH…AFAV. Heme is bound at residue H333.

Belongs to the COX15/CtaA family. Type 2 subfamily. As to quaternary structure, interacts with CtaB. Heme b is required as a cofactor.

The protein localises to the cell membrane. It carries out the reaction Fe(II)-heme o + 2 A + H2O = Fe(II)-heme a + 2 AH2. It participates in porphyrin-containing compound metabolism; heme A biosynthesis; heme A from heme O: step 1/1. Its function is as follows. Catalyzes the conversion of heme O to heme A by two successive hydroxylations of the methyl group at C8. The first hydroxylation forms heme I, the second hydroxylation results in an unstable dihydroxymethyl group, which spontaneously dehydrates, resulting in the formyl group of heme A. The polypeptide is Heme A synthase (Brucella anthropi (strain ATCC 49188 / DSM 6882 / CCUG 24695 / JCM 21032 / LMG 3331 / NBRC 15819 / NCTC 12168 / Alc 37) (Ochrobactrum anthropi)).